The sequence spans 21 residues: Large ribosomal subunit protein uL10 (21 aa).

This sequence belongs to the universal ribosomal protein uL10 family. In terms of assembly, part of the ribosomal stalk of the 50S ribosomal subunit. The N-terminus interacts with L11 and the large rRNA to form the base of the stalk. The C-terminus forms an elongated spine to which L12 dimers bind in a sequential fashion forming a multimeric L10(L12)X complex.

Its function is as follows. Forms part of the ribosomal stalk, playing a central role in the interaction of the ribosome with GTP-bound translation factors. The polypeptide is Large ribosomal subunit protein uL10 (rplJ) (Proteus vulgaris).